We begin with the raw amino-acid sequence, 108 residues long: PTS system fructose-like EIIB component 1 (108 aa).

One can recognise a PTS EIIB type-2 domain in the interval 1 to 104; the sequence is MSKKLIALCA…IIKEIEEMIA (104 aa). Cys-11 acts as the Phosphocysteine intermediate in catalysis. At Cys-11 the chain carries Phosphocysteine; by EIIA.

It localises to the cytoplasm. The catalysed reaction is D-fructose(out) + N(pros)-phospho-L-histidyl-[protein] = D-fructose 1-phosphate(in) + L-histidyl-[protein]. Its function is as follows. The phosphoenolpyruvate-dependent sugar phosphotransferase system (sugar PTS), a major carbohydrate active transport system, catalyzes the phosphorylation of incoming sugar substrates concomitantly with their translocation across the cell membrane. The enzyme II FryABC PTS system is involved in fructose transport. The polypeptide is PTS system fructose-like EIIB component 1 (fryB) (Escherichia coli O157:H7).